A 599-amino-acid polypeptide reads, in one-letter code: Estrogen receptor (599 aa).

The tract at residues 1–188 (MTMTLHTKAS…IMESAKETRY (188 aa)) is modulating (transactivation AF-1); mediates interaction with MACROD1. Ser10 carries an O-linked (GlcNAc) serine glycan. The segment at 35 to 47 (MERALGEVYVDNS) is required for interaction with NCOA1. Residues 35 to 178 (MERALGEVYV…LSSSNEKGNM (144 aa)) form an interaction with DDX5; self-association region. Thr50 is a glycosylation site (O-linked (GlcNAc) threonine). Phosphoserine; by CDK2 occurs at positions 108 and 110. Residue Ser122 is modified to Phosphoserine. Residues 147-175 (DTGPPAFYRSNSDNRRQNGRERLSSSNEK) form a disordered region. The span at 158 to 169 (SDNRRQNGRERL) shows a compositional bias: basic and acidic residues. The residue at position 171 (Ser171) is a Phosphoserine; by CK2. 2 NR C4-type zinc fingers span residues 189–209 (CAVCNDYASGYHYGVWSCEGC) and 225–249 (CPATNQCTIDKNRRKSCQACRLRKC). Positions 189–254 (CAVCNDYASG…RLRKCYEVGM (66 aa)) form a DNA-binding region, nuclear receptor. The segment at 189–314 (CAVCNDYASG…TKKNSPALSL (126 aa)) is mediates interaction with DNTTIP2. The tract at residues 255 to 314 (MKGGIRKDRRGGRMLKHKRQRDDLEGRNEMGASGDMRAANLWPSPLVIKHTKKNSPALSL) is hinge. An Asymmetric dimethylarginine; by PRMT1 modification is found at Arg264. Residues 266-599 (GRMLKHKRQR…PEAEGFPNTI (334 aa)) are interaction with AKAP13. Residues 268–599 (MLKHKRQRDD…PEAEGFPNTI (332 aa)) are self-association. The 237-residue stretch at 315 to 551 (TADQMVSALL…DLLLEMLDAH (237 aa)) folds into the NR LBD domain. The tract at residues 315 to 599 (TADQMVSALL…PEAEGFPNTI (285 aa)) is transactivation AF-2. Residues Glu357 and Arg398 each contribute to the 17beta-estradiol site. Cys451 carries S-palmitoyl cysteine lipidation. His528 is a binding site for 17beta-estradiol. Tyr541 carries the post-translational modification Phosphotyrosine; by Tyr-kinases. Positions 557–581 (ASRMGVPPEEPSQTQLATTSSTSAH) are disordered. Residues 568–581 (SQTQLATTSSTSAH) are compositionally biased toward low complexity. A glycan (O-linked (GlcNAc) threonine) is linked at Thr575.

Belongs to the nuclear hormone receptor family. NR3 subfamily. As to quaternary structure, interacts with BCAS3. Binds DNA as a homodimer. Can form a heterodimer with ESR2. Interacts with coactivator NCOA5. Interacts with PELP1, the interaction is enhanced by 17-beta-estradiol; the interaction increases ESR1 transcriptional activity. Interacts with NCOA7; the interaction is ligand-inducible. Interacts with AKAP13, CUEDC2, HEXIM1, KDM5A, MAP1S, SMARD1, and UBE1C. Interacts with MUC1; the interaction is stimulated by 7 beta-estradiol (E2) and enhances ESR1-mediated transcription. Interacts with DNTTIP2, and UIMC1. Interacts with KMT2D/MLL2. Interacts with ATAD2; the interaction is enhanced by estradiol. Interacts with KIF18A and LDB1. Interacts with RLIM (via its C-terminus). Interacts with MACROD1. Interacts with SH2D4A and PLCG. Interacts with SH2D4A; the interaction blocks binding to PLCG and inhibits estrogen-induced cell proliferation. Interacts with DYNLL1. Interacts with CCDC62; the interaction requires estradiol and appears to enhance the transcription of target genes. Interacts with NR2C1; the interaction prevents homodimerization of ESR1 and suppresses its transcriptional activity and cell growth. Interacts with DNAAF4. Interacts with PRMT2. Interacts with RBFOX2. Interacts with EP300; the interaction is estrogen-dependent and enhanced by CITED1. Interacts with CITED1; the interaction is estrogen-dependent. Interacts with FAM120B, FOXL2, PHB2 and SLC30A9. Interacts with coactivators NCOA3 and NCOA6. Interacts with STK3/MST2 only in the presence of SAV1 and vice-versa. Binds to CSNK1D. Interacts with NCOA2; NCOA2 can interact with ESR1 AF-1 and AF-2 domains simultaneously and mediate their transcriptional synergy. Interacts with DDX5. Interacts with NCOA1; the interaction seems to require a self-association of N-terminal and C-terminal regions. Interacts with ZNF366, DDX17, NFKB1, RELA, SP1 and SP3. Interacts with NRIP1. Interacts with GPER1; the interaction occurs in an estrogen-dependent manner. Interacts with CLOCK and the interaction is stimulated by estrogen. Interacts with BCAS3. Interacts with TRIP4 (ufmylated); estrogen dependent. Interacts with LMTK3; the interaction phosphorylates ESR1 (in vitro) and protects it against proteasomal degradation. Interacts with CCAR2 (via N-terminus) in a ligand-independent manner. Interacts with ZFHX3. Interacts with SFR1 in a ligand-dependent and -independent manner. Interacts with DCAF13, LATS1 and DCAF1; regulates ESR1 ubiquitination and ubiquitin-mediated proteasomal degradation. Interacts (via DNA-binding domain) with POU4F2 isoform 2 (C-terminus); this interaction increases the estrogen receptor ESR1 transcriptional activity in a DNA- and ligand 17-beta-estradiol-independent manner. Interacts with ESRRB isoform 1. Interacts with UBE3A and WBP2. Interacts with GTF2B. Interacts with RBM39. In the absence of hormonal ligand, interacts with TACC1. Interacts with PI3KR1 or PI3KR2 and PTK2/FAK1. Interacts with SRC. Interacts with BAG1; the interaction is promoted in the absence of estradiol (17-beta-estradiol/E2). Interacts with and ubiquitinated by STUB1; the interaction is promoted in the absence of estradiol (17-beta-estradiol/E2). Interacts with NEDD8. Phosphorylated by cyclin A/CDK2 and CK1. Phosphorylation probably enhances transcriptional activity. Dephosphorylation at Ser-122 by PPP5C inhibits its transactivation activity. Phosphorylated by LMTK3 (in vitro). Post-translationally, ubiquitinated. Deubiquitinated by OTUB1. In terms of processing, palmitoylated at Cys-451 by ZDHHC7 and ZDHHC21. This modification is required for plasma membrane targeting and for rapid intracellular signaling via ERK and AKT kinases and cAMP generation, but not for signaling mediated by the nuclear hormone receptor. Ubiquitinated; regulated by LATS1 via DCAF1 it leads to ESR1 proteasomal degradation. Deubiquitinated by OTUB1. Ubiquitinated by STUB1/CHIP; in the CA1 hippocampal region following loss of endogenous circulating estradiol (17-beta-estradiol/E2). Ubiquitinated by UBR5, leading to its degradation: UBR5 specifically recognizes and binds ligand-bound ESR1 when it is not associated with coactivators (NCOAs). In presence of NCOAs, the UBR5-degron is not accessible, preventing its ubiquitination and degradation. Post-translationally, dimethylated by PRMT1 at Arg-264. The methylation may favor cytoplasmic localization. Demethylated by JMJD6 at Arg-264.

The protein resides in the nucleus. The protein localises to the cytoplasm. It localises to the golgi apparatus. Its subcellular location is the cell membrane. Nuclear hormone receptor. The steroid hormones and their receptors are involved in the regulation of eukaryotic gene expression and affect cellular proliferation and differentiation in target tissues. Ligand-dependent nuclear transactivation involves either direct homodimer binding to a palindromic estrogen response element (ERE) sequence or association with other DNA-binding transcription factors, such as AP-1/c-Jun, c-Fos, ATF-2, Sp1 and Sp3, to mediate ERE-independent signaling. Ligand binding induces a conformational change allowing subsequent or combinatorial association with multiprotein coactivator complexes through LXXLL motifs of their respective components. Mutual transrepression occurs between the estrogen receptor (ER) and NF-kappa-B in a cell-type specific manner. Decreases NF-kappa-B DNA-binding activity and inhibits NF-kappa-B-mediated transcription from the IL6 promoter and displace RELA/p65 and associated coregulators from the promoter. Recruited to the NF-kappa-B response element of the CCL2 and IL8 promoters and can displace CREBBP. Present with NF-kappa-B components RELA/p65 and NFKB1/p50 on ERE sequences. Can also act synergistically with NF-kappa-B to activate transcription involving respective recruitment adjacent response elements; the function involves CREBBP. Can activate the transcriptional activity of TFF1. Also mediates membrane-initiated estrogen signaling involving various kinase cascades. Essential for MTA1-mediated transcriptional regulation of BRCA1 and BCAS3. Maintains neuronal survival in response to ischemic reperfusion injury when in the presence of circulating estradiol (17-beta-estradiol/E2). The chain is Estrogen receptor (Esr1) from Mus musculus (Mouse).